The primary structure comprises 847 residues: Beta-hexosaminidase (847 aa).

3 disulfides stabilise this stretch: Cys-31–Cys-40, Cys-377–Cys-385, and Cys-484–Cys-530. Glu-519 serves as the catalytic Proton donor.

This sequence belongs to the glycosyl hydrolase 20 family.

The enzyme catalyses Hydrolysis of terminal non-reducing N-acetyl-D-hexosamine residues in N-acetyl-beta-D-hexosaminides.. It participates in glycan degradation; chitin degradation. Hydrolysis of terminal, non-reducing N-acetyl-beta-D-glucosamine residues in chitobiose and higher analogs, and in glycoproteins. The sequence is that of Beta-hexosaminidase (hex) from Vibrio vulnificus.